A 192-amino-acid polypeptide reads, in one-letter code: Group XIIA secretory phospholipase A2 (192 aa).

The N-terminal stretch at 1–25 (MVTPRPAPARSPALLLLLLLATARG) is a signal peptide. 3 residues coordinate Ca(2+): Gly91, Pro93, and Phe95. His113 is a catalytic residue. Asp114 is a binding site for Ca(2+). The active site involves Asp128.

It belongs to the phospholipase A2 family. It depends on Ca(2+) as a cofactor.

Its subcellular location is the secreted. It localises to the cytoplasm. It carries out the reaction a 1,2-diacyl-sn-glycero-3-phosphocholine + H2O = a 1-acyl-sn-glycero-3-phosphocholine + a fatty acid + H(+). PA2 catalyzes the calcium-dependent hydrolysis of the 2-acyl groups in 3-sn-phosphoglycerides. Does not exhibit detectable activity toward sn-2-arachidonoyl- or linoleoyl-phosphatidylcholine or -phosphatidylethanolamine. The polypeptide is Group XIIA secretory phospholipase A2 (Pla2g12a) (Mus musculus (Mouse)).